Here is an 877-residue protein sequence, read N- to C-terminus: Alanine--tRNA ligase (877 aa).

The Zn(2+) site is built by His562, His566, Cys664, and His668.

Belongs to the class-II aminoacyl-tRNA synthetase family. The cofactor is Zn(2+).

It localises to the cytoplasm. It catalyses the reaction tRNA(Ala) + L-alanine + ATP = L-alanyl-tRNA(Ala) + AMP + diphosphate. Functionally, catalyzes the attachment of alanine to tRNA(Ala) in a two-step reaction: alanine is first activated by ATP to form Ala-AMP and then transferred to the acceptor end of tRNA(Ala). Also edits incorrectly charged Ser-tRNA(Ala) and Gly-tRNA(Ala) via its editing domain. The polypeptide is Alanine--tRNA ligase (Picosynechococcus sp. (strain ATCC 27264 / PCC 7002 / PR-6) (Agmenellum quadruplicatum)).